The following is a 408-amino-acid chain: Probable ethanolamine permease EutH (408 aa).

11 helical membrane passes run 1–21 (MGIN…AAVD), 61–81 (AMVG…PVII), 89–109 (ANPS…FFLA), 126–146 (ILGS…LGII), 155–175 (ALGV…GGLI), 192–212 (FALI…VALG), 230–250 (FLVA…LLGW), 274–294 (IEVI…VLLL), 313–333 (NIAA…FGMM), 342–362 (VINC…LGFA), and 369–389 (MIFP…GVAM).

Belongs to the EutH family.

Its subcellular location is the cell inner membrane. The catalysed reaction is ethanolamine(in) = ethanolamine(out). Its pathway is amine and polyamine degradation; ethanolamine degradation. Functionally, probably involved in the diffusion of protonated ethanolamine (EA) into the cell at low pH. At low pH most EA is protonated, and this permease becomes necessary. Contributes to bacterial survival and replication in acidified macrophage vacuoles, but not to bacterial uptake by macrophages. Its function is as follows. Expression of the eut operon allows this bacteria to use ethanolamine (EA) as a carbon, nitrogen and energy source. It relies on cobalamin (vitamin B12) both as a cofactor for the ethanolamine ammonia-lyase (EAL) activity and to induce the operon. EA enhances bacterial survival in macrophages in a concentration-dependent manner, suggesting it is an important nutrient during infection. This Salmonella typhimurium (strain LT2 / SGSC1412 / ATCC 700720) protein is Probable ethanolamine permease EutH.